Consider the following 713-residue polypeptide: Polyribonucleotide nucleotidyltransferase (713 aa).

Aspartate 488 and aspartate 494 together coordinate Mg(2+). A KH domain is found at 555–614 (PQMEIIKVPTDKIRDVIGSGGKVIRGIVDETGAKVNIDDDGTVQISAMDRKSIDAAIKMI). The S1 motif domain maps to 624–692 (GEIYEGKVVS…ERGKVRLSMK (69 aa)).

The protein belongs to the polyribonucleotide nucleotidyltransferase family. It depends on Mg(2+) as a cofactor.

It localises to the cytoplasm. The enzyme catalyses RNA(n+1) + phosphate = RNA(n) + a ribonucleoside 5'-diphosphate. Involved in mRNA degradation. Catalyzes the phosphorolysis of single-stranded polyribonucleotides processively in the 3'- to 5'-direction. This is Polyribonucleotide nucleotidyltransferase from Hyphomonas neptunium (strain ATCC 15444).